The chain runs to 978 residues: Exocyst complex component 5 (978 aa).

Residues 1-11 (MSWARNIQSRI) show a composition bias toward polar residues. Disordered regions lie at residues 1 to 87 (MSWA…TTTQ) and 122 to 246 (TSPS…TTPY). Composition is skewed to low complexity over residues 36–52 (PSSPTLSALSSPITSLT) and 62–86 (SQPTTNTTSLTSTSPPSPTISTTTT). A compositionally biased stretch (polar residues) spans 122–142 (TSPSMASPIGTSTGIQNPNAK). The span at 143-245 (PSSLPSPSQS…QPTPIKQTTP (103 aa)) shows a compositional bias: low complexity. Residues 303–325 (NTQLQLSQLESNIDRRLDDLAEE) are a coiled coil.

Belongs to the SEC10 family. The exocyst complex is composed of sec3/exoc1, sec5/exoc2, sec6/exoc3, sec8/exoc4, sec10/exoc5, sec15/exoc6, exo70/exoc7 and exo84/exoc8.

Component of the exocyst complex involved in the docking of exocytic vesicles with fusion sites on the plasma membrane. This Dictyostelium discoideum (Social amoeba) protein is Exocyst complex component 5 (exoc5).